Here is a 640-residue protein sequence, read N- to C-terminus: Chaperone protein DnaK (640 aa).

A Phosphothreonine; by autocatalysis modification is found at Thr196. Basic and acidic residues predominate over residues 547–569 (GDKIPSDKRPALEGALEKLKDAT). Disordered stretches follow at residues 547-575 (GDKI…GTTE) and 595-640 (LYQA…GNGK). Positions 603–615 (TNASEPTQNTDGS) are enriched in polar residues. Positions 625 to 634 (GEVENAEFEV) are enriched in acidic residues.

It belongs to the heat shock protein 70 family.

Functionally, acts as a chaperone. This Chlorobium phaeobacteroides (strain DSM 266 / SMG 266 / 2430) protein is Chaperone protein DnaK.